The primary structure comprises 258 residues: NAD-dependent protein deacylase (258 aa).

One can recognise a Deacetylase sirtuin-type domain in the interval 3–258 (ERQLEKSIEH…LPALMRGLSA (256 aa)). Residue 28-48 (GAGMSADSGLETYRDDKTGLW) coordinates NAD(+). Y73 and R76 together coordinate substrate. 109 to 112 (QNID) serves as a coordination point for NAD(+). The Proton acceptor role is filled by H127. Residues C135, C138, C161, and C164 each contribute to the Zn(2+) site. Residues 201 to 203 (GTS) and A245 contribute to the NAD(+) site.

Belongs to the sirtuin family. Class III subfamily. The cofactor is Zn(2+).

Its subcellular location is the cytoplasm. It carries out the reaction N(6)-acetyl-L-lysyl-[protein] + NAD(+) + H2O = 2''-O-acetyl-ADP-D-ribose + nicotinamide + L-lysyl-[protein]. The enzyme catalyses N(6)-succinyl-L-lysyl-[protein] + NAD(+) + H2O = 2''-O-succinyl-ADP-D-ribose + nicotinamide + L-lysyl-[protein]. NAD-dependent lysine deacetylase and desuccinylase that specifically removes acetyl and succinyl groups on target proteins. Modulates the activities of several proteins which are inactive in their acylated form. This chain is NAD-dependent protein deacylase, found in Corynebacterium glutamicum (strain ATCC 13032 / DSM 20300 / JCM 1318 / BCRC 11384 / CCUG 27702 / LMG 3730 / NBRC 12168 / NCIMB 10025 / NRRL B-2784 / 534).